Consider the following 272-residue polypeptide: B3 domain-containing protein Os10g0323000 (272 aa).

A DNA-binding region (TF-B3 1) is located at residues 39–132 (RYGENRKHGQ…TLDLLILDKH (94 aa)). The interval 139–171 (PPSKRDLKLKSKRSTHQDSKGHPSNTDPGPSRI) is disordered. A compositionally biased stretch (basic and acidic residues) spans 141–159 (SKRDLKLKSKRSTHQDSKG). A DNA-binding region (TF-B3 2) is located at residues 180-272 (ESSANTQLLV…THLGVIVDIF (93 aa)).

It is found in the nucleus. In Oryza sativa subsp. japonica (Rice), this protein is B3 domain-containing protein Os10g0323000.